Here is a 435-residue protein sequence, read N- to C-terminus: Serine--tRNA ligase (435 aa).

Residue T242–E244 coordinates L-serine. Position 273-275 (R273–E275) interacts with ATP. An L-serine-binding site is contributed by E296. Residue E360–S363 participates in ATP binding. S396 lines the L-serine pocket.

Belongs to the class-II aminoacyl-tRNA synthetase family. Type-1 seryl-tRNA synthetase subfamily. As to quaternary structure, homodimer. The tRNA molecule binds across the dimer.

The protein localises to the cytoplasm. It catalyses the reaction tRNA(Ser) + L-serine + ATP = L-seryl-tRNA(Ser) + AMP + diphosphate + H(+). The catalysed reaction is tRNA(Sec) + L-serine + ATP = L-seryl-tRNA(Sec) + AMP + diphosphate + H(+). It participates in aminoacyl-tRNA biosynthesis; selenocysteinyl-tRNA(Sec) biosynthesis; L-seryl-tRNA(Sec) from L-serine and tRNA(Sec): step 1/1. Functionally, catalyzes the attachment of serine to tRNA(Ser). Is also able to aminoacylate tRNA(Sec) with serine, to form the misacylated tRNA L-seryl-tRNA(Sec), which will be further converted into selenocysteinyl-tRNA(Sec). This chain is Serine--tRNA ligase, found in Vibrio parahaemolyticus serotype O3:K6 (strain RIMD 2210633).